The primary structure comprises 115 residues: NADH-ubiquinone oxidoreductase chain 3 (115 aa).

3 helical membrane-spanning segments follow: residues 3-23 (LIMV…VAFW), 55-75 (FFLV…LLPI), and 84-104 (INTM…GLAY).

This sequence belongs to the complex I subunit 3 family. In terms of assembly, core subunit of respiratory chain NADH dehydrogenase (Complex I) which is composed of 45 different subunits. Interacts with TMEM186. Interacts with TMEM242.

It localises to the mitochondrion inner membrane. The enzyme catalyses a ubiquinone + NADH + 5 H(+)(in) = a ubiquinol + NAD(+) + 4 H(+)(out). In terms of biological role, core subunit of the mitochondrial membrane respiratory chain NADH dehydrogenase (Complex I) which catalyzes electron transfer from NADH through the respiratory chain, using ubiquinone as an electron acceptor. Essential for the catalytic activity of complex I. This Scotinomys teguina (Alston's brown mouse) protein is NADH-ubiquinone oxidoreductase chain 3.